The primary structure comprises 316 residues: MEKFELHILGCGSALPTTRHFATSQVVNLREKLFMIDCGEGAQMQLRRSRLKFSRLNHIFISHLHGDHCFGLLGLISTFGLLGRTADLHIHSPKGLEELFAPLLSFFCKTLAYKVFFHEFETKEPTLIYDDRSVAVTTIPLRHRIPCCGFLFEEKQRPNHIIRDMVDFYKVPVYELNRIKNGADFVTPEGEVIPNHRLTRPSAPARKYAYCSDTIYRPEIVEQIKGIDLLFHEATFAQTEQVRAKETHHTTAAQAAQIALNAEVKQLVIGHFSARYEDESVLLNEAAAIFPQTVLARENMCITINNYTDTRDYDPL.

The Zn(2+) site is built by His-63, His-65, Asp-67, His-68, His-143, Asp-213, and His-271. Residue Asp-67 is the Proton acceptor of the active site.

This sequence belongs to the RNase Z family. In terms of assembly, homodimer. Zn(2+) is required as a cofactor.

It catalyses the reaction Endonucleolytic cleavage of RNA, removing extra 3' nucleotides from tRNA precursor, generating 3' termini of tRNAs. A 3'-hydroxy group is left at the tRNA terminus and a 5'-phosphoryl group is left at the trailer molecule.. Functionally, zinc phosphodiesterase, which displays some tRNA 3'-processing endonuclease activity. Probably involved in tRNA maturation, by removing a 3'-trailer from precursor tRNA. This is Ribonuclease Z from Bacteroides thetaiotaomicron (strain ATCC 29148 / DSM 2079 / JCM 5827 / CCUG 10774 / NCTC 10582 / VPI-5482 / E50).